We begin with the raw amino-acid sequence, 610 residues long: Transcription termination factor Rho (610 aa).

Positions 117–227 (EVSRRERRGA…GDGAEAELRQ (111 aa)) are disordered. Positions 118 to 131 (VSRRERRGASREAD) are enriched in basic and acidic residues. Residues 178–187 (GVEQQSSSLQ) are compositionally biased toward polar residues. Over residues 189-198 (RGDDDGEGRQ) the composition is skewed to basic and acidic residues. The segment covering 199–214 (GRRGRRFRDRDRRRRG) has biased composition (basic residues). Over residues 215–227 (ERSGDGAEAELRQ) the composition is skewed to basic and acidic residues. The region spanning 231–309 (VQPVAGILDV…VRLDSINGGS (79 aa)) is the Rho RNA-BD domain. ATP-binding positions include 352 to 357 (GKGQRA), 364 to 369 (KAGKTT), and R395.

This sequence belongs to the Rho family. In terms of assembly, homohexamer. The homohexamer assembles into an open ring structure.

Functionally, facilitates transcription termination by a mechanism that involves Rho binding to the nascent RNA, activation of Rho's RNA-dependent ATPase activity, and release of the mRNA from the DNA template. This chain is Transcription termination factor Rho, found in Mycobacterium leprae (strain TN).